Here is a 385-residue protein sequence, read N- to C-terminus: Bifunctional chorismate mutase/prephenate dehydratase (385 aa).

The Chorismate mutase domain occupies 1–92 (MPANNSLLIF…ESVATQKKLL (92 aa)). Substrate is bound by residues Arg-11, Arg-28, Lys-39, Asp-48, Glu-52, Ser-84, and Gln-88. A Prephenate dehydratase domain is found at 105 to 285 (NFSFLGPKGS…NITRFILLNR (181 aa)). A regulatory region spans residues 286–385 (NPKKISKNIP…PSEKITPIAP (100 aa)). In terms of domain architecture, ACT spans 299 to 376 (TLIFTTGQEA…RFIKILGCYP (78 aa)).

It is found in the cytoplasm. It carries out the reaction chorismate = prephenate. It catalyses the reaction prephenate + H(+) = 3-phenylpyruvate + CO2 + H2O. Its pathway is amino-acid biosynthesis; L-phenylalanine biosynthesis; phenylpyruvate from prephenate: step 1/1. The protein operates within metabolic intermediate biosynthesis; prephenate biosynthesis; prephenate from chorismate: step 1/1. Its function is as follows. Catalyzes the Claisen rearrangement of chorismate to prephenate and the decarboxylation/dehydration of prephenate to phenylpyruvate. This Buchnera aphidicola subsp. Acyrthosiphon pisum (strain APS) (Acyrthosiphon pisum symbiotic bacterium) protein is Bifunctional chorismate mutase/prephenate dehydratase (pheA).